The chain runs to 573 residues: Probable cytochrome c oxidase subunit 1 (573 aa).

The helical transmembrane segment at Ile40–Leu60 threads the bilayer. A Fe(II)-heme a-binding site is contributed by His86. Helical transmembrane passes span Ile89–Leu109, Leu121–Ile141, Leu170–Ile190, Ile213–Gly233, Leu258–Val278, and Ile290–Val310. Cu cation contacts are provided by His264 and Tyr268. Residues His264–Tyr268 constitute a cross-link (1'-histidyl-3'-tyrosine (His-Tyr)). Residues His313 and His314 each contribute to the Cu cation site. 2 consecutive transmembrane segments (helical) span residues Met315–Val335 and Met359–Leu379. Residue His397 coordinates heme a3. Transmembrane regions (helical) follow at residues Phe398–Phe418, Leu433–Gly453, and Val476–Phe496. His399 is a binding site for Fe(II)-heme a.

The protein belongs to the heme-copper respiratory oxidase family.

The protein localises to the cell membrane. It carries out the reaction 4 Fe(II)-[cytochrome c] + O2 + 8 H(+)(in) = 4 Fe(III)-[cytochrome c] + 2 H2O + 4 H(+)(out). It functions in the pathway energy metabolism; oxidative phosphorylation. Cytochrome c oxidase is the component of the respiratory chain that catalyzes the reduction of oxygen to water. Subunits 1-3 form the functional core of the enzyme complex. CO I is the catalytic subunit of the enzyme. Electrons originating in cytochrome c are transferred via the copper A center of subunit 2 and heme A of subunit 1 to the bimetallic center formed by heme A3 and copper B. This chain is Probable cytochrome c oxidase subunit 1 (ctaD), found in Mycobacterium bovis (strain ATCC BAA-935 / AF2122/97).